Here is a 311-residue protein sequence, read N- to C-terminus: Homoserine kinase (311 aa).

96-106 (PLARGLGSSAA) is a binding site for ATP.

This sequence belongs to the GHMP kinase family. Homoserine kinase subfamily.

It is found in the cytoplasm. It carries out the reaction L-homoserine + ATP = O-phospho-L-homoserine + ADP + H(+). The protein operates within amino-acid biosynthesis; L-threonine biosynthesis; L-threonine from L-aspartate: step 4/5. Its function is as follows. Catalyzes the ATP-dependent phosphorylation of L-homoserine to L-homoserine phosphate. The polypeptide is Homoserine kinase (Natranaerobius thermophilus (strain ATCC BAA-1301 / DSM 18059 / JW/NM-WN-LF)).